Consider the following 580-residue polypeptide: CTP synthase (580 aa).

Residues 304–559 (NIILVGKYVS…VAASSGCLDE (256 aa)) enclose the Glutamine amidotransferase type-1 domain. Catalysis depends on for GATase activity residues cysteine 403, histidine 532, and glutamate 534.

It belongs to the CTP synthase family.

It catalyses the reaction UTP + L-glutamine + ATP + H2O = CTP + L-glutamate + ADP + phosphate + 2 H(+). It functions in the pathway pyrimidine metabolism; CTP biosynthesis via de novo pathway; CTP from UDP: step 2/2. Functionally, catalyzes the ATP-dependent amination of UTP to CTP with either L-glutamine or ammonia as the source of nitrogen. This is CTP synthase (URA7) from Gibberella zeae (strain ATCC MYA-4620 / CBS 123657 / FGSC 9075 / NRRL 31084 / PH-1) (Wheat head blight fungus).